Reading from the N-terminus, the 315-residue chain is Ornithine carbamoyltransferase (315 aa).

Carbamoyl phosphate is bound by residues 53-56 (STRT), Gln80, Arg104, and 131-134 (HPCQ). Residues Asn163, Asp227, and 231–232 (SM) contribute to the L-ornithine site. Carbamoyl phosphate is bound by residues 267 to 268 (CL) and Arg295.

The protein belongs to the aspartate/ornithine carbamoyltransferase superfamily. OTCase family.

The protein localises to the cytoplasm. The catalysed reaction is carbamoyl phosphate + L-ornithine = L-citrulline + phosphate + H(+). It functions in the pathway amino-acid biosynthesis; L-arginine biosynthesis; L-arginine from L-ornithine and carbamoyl phosphate: step 1/3. In terms of biological role, reversibly catalyzes the transfer of the carbamoyl group from carbamoyl phosphate (CP) to the N(epsilon) atom of ornithine (ORN) to produce L-citrulline. In Rhodococcus jostii (strain RHA1), this protein is Ornithine carbamoyltransferase.